The primary structure comprises 683 residues: Long-chain-fatty-acid--CoA ligase 5 (683 aa).

The chain crosses the membrane as a helical; Signal-anchor for type III membrane protein span at residues 12-32 (LPTPALICLLTFGTAIFLWLI). Residues 33–683 (NRPQPVLPLI…IKSLYESIEE (651 aa)) lie on the Cytoplasmic side of the membrane. Position 361 is an N6-acetyllysine (Lys361).

Belongs to the ATP-dependent AMP-binding enzyme family.

It is found in the mitochondrion. The protein resides in the endoplasmic reticulum. Its subcellular location is the mitochondrion outer membrane. It localises to the endoplasmic reticulum membrane. The protein localises to the cell membrane. The catalysed reaction is a long-chain fatty acid + ATP + CoA = a long-chain fatty acyl-CoA + AMP + diphosphate. It catalyses the reaction (5Z,8Z,11Z,14Z)-eicosatetraenoate + ATP + CoA = (5Z,8Z,11Z,14Z)-eicosatetraenoyl-CoA + AMP + diphosphate. It carries out the reaction hexadecanoate + ATP + CoA = hexadecanoyl-CoA + AMP + diphosphate. The enzyme catalyses (E)-hexadec-2-enoate + ATP + CoA = (2E)-hexadecenoyl-CoA + AMP + diphosphate. The catalysed reaction is 15-hydroxy-(5Z,8Z,11Z,13E)-eicosatetraenoate + ATP + CoA = 15-hydroxy-(5Z,8Z,11Z,13E)-eicosatetraenoyl-CoA + AMP + diphosphate. It catalyses the reaction 12-hydroxy-(5Z,8Z,10E,14Z)-eicosatetraenoate + ATP + CoA = 12-hydroxy-(5Z,8Z,10E,14Z)-eicosatetraenoyl-CoA + AMP + diphosphate. It carries out the reaction 5-hydroxy-(6E,8Z,11Z,14Z)-eicosatetraenoate + ATP + CoA = 5-hydroxy-(6E,8Z,11Z,14Z)-eicosatetraenoyl-CoA + AMP + diphosphate. The enzyme catalyses 14,15-epoxy-(5Z,8Z,11Z)-eicosatrienoate + ATP + CoA = 14,15-epoxy-(5Z,8Z,11Z)-eicosatrienoyl-CoA + AMP + diphosphate. The catalysed reaction is 11,12-epoxy-(5Z,8Z,14Z)-eicosatrienoate + ATP + CoA = 11,12-epoxy-(5Z,8Z,14Z)-eicosatrienoyl-CoA + AMP + diphosphate. It catalyses the reaction (9Z)-octadecenoate + ATP + CoA = (9Z)-octadecenoyl-CoA + AMP + diphosphate. Catalyzes the conversion of long-chain fatty acids to their active form acyl-CoAs for both synthesis of cellular lipids, and degradation via beta-oxidation. ACSL5 may activate fatty acids from exogenous sources for the synthesis of triacylglycerol destined for intracellular storage. It was suggested that it may also stimulate fatty acid oxidation. At the villus tip of the crypt-villus axis of the small intestine may sensitize epithelial cells to apoptosis specifically triggered by the death ligand TRAIL. May have a role in the survival of glioma cells. Utilizes a wide range of saturated fatty acids with a preference for C16-C18 unsaturated fatty acids. The sequence is that of Long-chain-fatty-acid--CoA ligase 5 from Mus musculus (Mouse).